The following is a 178-amino-acid chain: HTH-type transcriptional regulator SutR (178 aa).

The HTH cro/C1-type domain maps to 12–66; the sequence is LKQLRQQRGWSLSRLAEATGVSKAMLGQIERNESSPTVATLWKIATGLNVPFSTF. A DNA-binding region (H-T-H motif) is located at residues 23-42; sequence LSRLAEATGVSKAMLGQIER. One can recognise a Cupin type-2 domain in the interval 105–171; it reads QMASGAISES…GGEQTVHFHS (67 aa).

Its function is as follows. Regulates the expression of 12-16 transcription units involved in various steps of sulfur utilization. Represses expression of pfkB, fliZ, cysE, ydcO and its own expression. Activates expression of ypfN. Acts by binding to SutR boxes. The polypeptide is HTH-type transcriptional regulator SutR (Escherichia coli (strain K12)).